An 84-amino-acid polypeptide reads, in one-letter code: Small ribosomal subunit protein uS17 (84 aa).

The protein belongs to the universal ribosomal protein uS17 family. As to quaternary structure, part of the 30S ribosomal subunit.

Its function is as follows. One of the primary rRNA binding proteins, it binds specifically to the 5'-end of 16S ribosomal RNA. The chain is Small ribosomal subunit protein uS17 from Proteus mirabilis (strain HI4320).